The following is a 437-amino-acid chain: (S)-6-hydroxynicotine oxidase (437 aa).

FAD contacts are provided by residues Ser16, 35–37 (EAR), Arg43, 57–60 (GGAG), Val231, Ser405, and 413–415 (EYI).

It belongs to the flavin monoamine oxidase family. Homodimer. The cofactor is FAD.

It catalyses the reaction (S)-6-hydroxynicotine + O2 + H2O = 6-hydroxypseudooxynicotine + H2O2. It carries out the reaction (S)-6-hydroxynicotine + O2 = 6-hydroxy-N-methylmyosmine + H2O2. It participates in alkaloid degradation; nicotine degradation; 6-hydroxypseudooxynicotine from nicotine (S-isomer route): step 2/2. Its activity is regulated as follows. Partially inhibited by Co(2+) or Zn(2+) and significantly inhibited by Ag(+), Cu(2+) and Hg(2+). Functionally, involved in the degradation of L-nicotine. Catalyzes the oxidation of (S)-6-hydroxynicotine (6-hydroxy-L-nicotine) to 6-hydroxypseudooxynicotine. Oxidation of the pyrrolidine ring of (S)-6-hydroxynicotine leads to the formation of the optically inactive 6-hydroxy-N-methylmyosmine, which hydrolyzes spontaneously to 6-hydroxypseudooxynicotine. Acts with absolute stereospecificity on the L-form of 6-hydroxynicotine. Also involved in the degradation of nornicotine, and catalyzes the oxidation of 6-hydroxynornicotine to 6-hydroxymyosmine, which hydrolyzes to 6-hydroxypseudooxynornicotine. In vitro, converts (S)-nicotine into N-methylmyosmine, which spontaneously hydrolyzes spontaneously into pseudooxynicotine, but catalytic efficiency is about 1900-fold higher with (S)-6-hydroxynicotine. In Shinella sp. (strain HZN7), this protein is (S)-6-hydroxynicotine oxidase.